The chain runs to 419 residues: GTPase Obg (419 aa).

Residues 1 to 156 (MRFVDYVSIE…FYLDLQLKVM (156 aa)) enclose the Obg domain. The OBG-type G domain occupies 157-334 (ADIGLVGKPN…LEEKQKKLEI (178 aa)). Residues 163-170 (GKPNAGKS), 188-192 (FTTLV), 209-212 (DLPG), 278-281 (NKCD), and 315-317 (NII) contribute to the GTP site. Ser170 and Thr190 together coordinate Mg(2+). One can recognise an OCT domain in the interval 342-419 (IEFNLKAPFL…RIYEFEFHWN (78 aa)).

Belongs to the TRAFAC class OBG-HflX-like GTPase superfamily. OBG GTPase family. As to quaternary structure, monomer. The cofactor is Mg(2+).

It is found in the cytoplasm. An essential GTPase which binds GTP, GDP and possibly (p)ppGpp with moderate affinity, with high nucleotide exchange rates and a fairly low GTP hydrolysis rate. Plays a role in control of the cell cycle, stress response, ribosome biogenesis and in those bacteria that undergo differentiation, in morphogenesis control. This Mesomycoplasma hyopneumoniae (strain 232) (Mycoplasma hyopneumoniae) protein is GTPase Obg.